Consider the following 505-residue polypeptide: RNA-splicing ligase RtcB homolog (505 aa).

The Mn(2+) site is built by Asp119, Cys122, His227, and His259. 226 to 230 (NHYAE) provides a ligand contact to GMP. At Ser300 the chain carries Phosphoserine. His353 lines the Mn(2+) pocket. Residues 353–354 (HN), 402–405 (GGTM), Ser409, and 428–431 (HGAG) contribute to the GMP site. His428 acts as the GMP-histidine intermediate in catalysis. A Glycyl lysine isopeptide (Lys-Gly) (interchain with G-Cter in SUMO2) cross-link involves residue Lys496. Residue Lys504 coordinates GMP.

It belongs to the RtcB family. As to quaternary structure, catalytic component of the tRNA-splicing ligase complex. The cofactor is Mn(2+).

It localises to the nucleus. The protein resides in the cytoplasm. The enzyme catalyses a 3'-end 3'-phospho-ribonucleotide-RNA + a 5'-end dephospho-ribonucleoside-RNA + GTP = a ribonucleotidyl-ribonucleotide-RNA + GMP + diphosphate. It carries out the reaction a 3'-end 2',3'-cyclophospho-ribonucleotide-RNA + a 5'-end dephospho-ribonucleoside-RNA + GTP + H2O = a ribonucleotidyl-ribonucleotide-RNA + GMP + diphosphate + H(+). In terms of biological role, catalytic subunit of the tRNA-splicing ligase complex that acts by directly joining spliced tRNA halves to mature-sized tRNAs by incorporating the precursor-derived splice junction phosphate into the mature tRNA as a canonical 3',5'-phosphodiester. May act as an RNA ligase with broad substrate specificity, and may function toward other RNAs. The polypeptide is RNA-splicing ligase RtcB homolog (Rattus norvegicus (Rat)).